The following is a 533-amino-acid chain: Adenine deaminase (533 aa).

The protein belongs to the metallo-dependent hydrolases superfamily. Adenine deaminase family. It depends on Mn(2+) as a cofactor.

The catalysed reaction is adenine + H2O + H(+) = hypoxanthine + NH4(+). This chain is Adenine deaminase, found in Sulfurovum sp. (strain NBC37-1).